Consider the following 272-residue polypeptide: Shikimate dehydrogenase (NADP(+)) (272 aa).

Shikimate-binding positions include 14–16 and Thr-61; that span reads SKS. Catalysis depends on Lys-65, which acts as the Proton acceptor. Glu-77 provides a ligand contact to NADP(+). Shikimate-binding residues include Asn-86 and Asp-102. Residues 126–130, 149–154, and Met-213 each bind NADP(+); these read GAGGA and NRTVSR. Tyr-215 is a binding site for shikimate. Residue Gly-237 coordinates NADP(+).

This sequence belongs to the shikimate dehydrogenase family. Homodimer.

The catalysed reaction is shikimate + NADP(+) = 3-dehydroshikimate + NADPH + H(+). It participates in metabolic intermediate biosynthesis; chorismate biosynthesis; chorismate from D-erythrose 4-phosphate and phosphoenolpyruvate: step 4/7. Involved in the biosynthesis of the chorismate, which leads to the biosynthesis of aromatic amino acids. Catalyzes the reversible NADPH linked reduction of 3-dehydroshikimate (DHSA) to yield shikimate (SA). In Shigella boydii serotype 18 (strain CDC 3083-94 / BS512), this protein is Shikimate dehydrogenase (NADP(+)).